Here is a 129-residue protein sequence, read N- to C-terminus: Glycine cleavage system H protein (129 aa).

A Lipoyl-binding domain is found at 24–106 (IAVIGISAYA…YEQGWLLKVQ (83 aa)). K65 carries the N6-lipoyllysine modification.

Belongs to the GcvH family. The glycine cleavage system is composed of four proteins: P, T, L and H. (R)-lipoate serves as cofactor.

Its function is as follows. The glycine cleavage system catalyzes the degradation of glycine. The H protein shuttles the methylamine group of glycine from the P protein to the T protein. In Synechococcus elongatus (strain ATCC 33912 / PCC 7942 / FACHB-805) (Anacystis nidulans R2), this protein is Glycine cleavage system H protein.